The sequence spans 282 residues: Proteasome subunit beta (282 aa).

Residues 1 to 55 (MDNSSTGRYPAASLPPAYLRPGSSSFTDFLRAQAPELLPTARSFPEGSVVQAAHG) constitute a propeptide, removed in mature form; by autocatalysis. The active-site Nucleophile is Thr56.

This sequence belongs to the peptidase T1B family. In terms of assembly, the 20S proteasome core is composed of 14 alpha and 14 beta subunits that assemble into four stacked heptameric rings, resulting in a barrel-shaped structure. The two inner rings, each composed of seven catalytic beta subunits, are sandwiched by two outer rings, each composed of seven alpha subunits. The catalytic chamber with the active sites is on the inside of the barrel. Has a gated structure, the ends of the cylinder being occluded by the N-termini of the alpha-subunits. Is capped by the proteasome-associated ATPase, ARC.

It localises to the cytoplasm. It catalyses the reaction Cleavage of peptide bonds with very broad specificity.. It participates in protein degradation; proteasomal Pup-dependent pathway. The formation of the proteasomal ATPase ARC-20S proteasome complex, likely via the docking of the C-termini of ARC into the intersubunit pockets in the alpha-rings, may trigger opening of the gate for substrate entry. Interconversion between the open-gate and close-gate conformations leads to a dynamic regulation of the 20S proteasome proteolysis activity. Its function is as follows. Component of the proteasome core, a large protease complex with broad specificity involved in protein degradation. This is Proteasome subunit beta from Actinosynnema mirum (strain ATCC 29888 / DSM 43827 / JCM 3225 / NBRC 14064 / NCIMB 13271 / NRRL B-12336 / IMRU 3971 / 101).